The sequence spans 146 residues: Large ribosomal subunit protein uL15 (146 aa).

Residues 1–13 are compositionally biased toward basic and acidic residues; the sequence is MKLNELKPNEGSR. A disordered region spans residues 1 to 54; it reads MKLNELKPNEGSRRNRKRVGRGTSSGYGKTAGRGQKGQLARTGGKTRLGFEGGQ. The span at 23-35 shows a compositional bias: gly residues; it reads TSSGYGKTAGRGQ.

This sequence belongs to the universal ribosomal protein uL15 family. Part of the 50S ribosomal subunit.

In terms of biological role, binds to the 23S rRNA. The chain is Large ribosomal subunit protein uL15 from Lactobacillus gasseri (strain ATCC 33323 / DSM 20243 / BCRC 14619 / CIP 102991 / JCM 1131 / KCTC 3163 / NCIMB 11718 / NCTC 13722 / AM63).